Reading from the N-terminus, the 173-residue chain is Pectinesterase inhibitor 2 (173 aa).

The signal sequence occupies residues 1 to 25 (MAAYLTNRVLMSSLMFFVMTGSLNA). Residues Cys-34 and Cys-43 are joined by a disulfide bond. 2 N-linked (GlcNAc...) asparagine glycosylation sites follow: Asn-39 and Asn-63. Cys-99 and Cys-139 are joined by a disulfide.

Belongs to the PMEI family. Interacts with PPME1. Highest expression in flowers. Expressed exclusively at the pollen tube tip.

The protein resides in the secreted. Its subcellular location is the extracellular space. It localises to the apoplast. Functionally, inhibits pectin methylesterase (PME) from flowers, siliques and pollen tube. The protein is Pectinesterase inhibitor 2 of Arabidopsis thaliana (Mouse-ear cress).